A 637-amino-acid chain; its full sequence is Transmembrane 9 superfamily member 10 (637 aa).

The N-terminal stretch at 1–23 (MAKVRILIFTLVLFFSLNVHIHG) is a signal peptide. Residues 24 to 274 (FYLPGVAPQD…YLLMADDQIH (251 aa)) lie on the Lumenal side of the membrane. A helical transmembrane segment spans residues 275-295 (WFSIVNSMMIVLFLSGMVAMI). Over 296–344 (MLRTLYRDISNYNQLESHEEALEETGWKLVHGDVFRPPTNPELLCVYAG) the chain is Cytoplasmic. The chain crosses the membrane as a helical span at residues 345–365 (TGVQCFGMILVTMIFACLGFL). At 366–370 (SPSNR) the chain is on the lumenal side. A helical transmembrane segment spans residues 371–391 (GGLMTAMLLLWVFMGLLAGYA). At 392–411 (SSRLYKTLRGTEWKRNALKT) the chain is on the cytoplasmic side. The helical transmembrane segment at 412-432 (AFMFPATVFVAFFVLNAIIWG) threads the bilayer. At 433–444 (QKSSGAVPFGTM) the chain is on the lumenal side. The helical transmembrane segment at 445–465 (FALVVLWFGISVPLVFIGGYI) threads the bilayer. The Cytoplasmic portion of the chain corresponds to 466–494 (GFRKPAPEDPVKTNKIPRQIPTQAWYMNP). The helical transmembrane segment at 495–515 (IFSILIGGILPFGAVFIELFF) threads the bilayer. Over 516–527 (ILTSIWLHQFYY) the chain is Lumenal. Residues 528 to 548 (IFGFLFIVFIILIITCAEITV) form a helical membrane-spanning segment. Topologically, residues 549–566 (VLCYFQLCSEDYQWWWRS) are cytoplasmic. A helical transmembrane segment spans residues 567-587 (YLTSGSSAVYLFLYAVFYFYT). Residues 588–593 (KLEITK) lie on the Lumenal side of the membrane. Residues 594–614 (LVSAVLYFGYMLIVSYVFFVF) form a helical membrane-spanning segment. Topologically, residues 615–637 (TGAIGFYACFWFTRLIYSSVKID) are cytoplasmic. Positions 626–631 (FTRLIY) match the Endoplasmic reticulum export signal motif. Positions 635-637 (KID) match the Golgi retention signal motif.

This sequence belongs to the nonaspanin (TM9SF) (TC 9.A.2) family.

The protein localises to the endosome membrane. The protein resides in the golgi apparatus membrane. The polypeptide is Transmembrane 9 superfamily member 10 (Arabidopsis thaliana (Mouse-ear cress)).